The sequence spans 333 residues: Glyoxylate reductase (333 aa).

Residues 158–161 (FGRI), 180–182 (SRS), and 239–241 (IAR) contribute to the NADP(+) site. Catalysis depends on residues R241 and E270. Catalysis depends on H288, which acts as the Proton donor. 288–290 (HIG) is an NADP(+) binding site.

The protein belongs to the D-isomer specific 2-hydroxyacid dehydrogenase family. GyaR subfamily. In terms of assembly, homodimer.

Its subcellular location is the cytoplasm. The enzyme catalyses glycolate + NAD(+) = glyoxylate + NADH + H(+). This is Glyoxylate reductase from Thermococcus kodakarensis (strain ATCC BAA-918 / JCM 12380 / KOD1) (Pyrococcus kodakaraensis (strain KOD1)).